A 374-amino-acid polypeptide reads, in one-letter code: Probable quinol oxidase subunit 2 (374 aa).

The signal sequence occupies residues 1–19 (MSKFKSLLLLFGTLILLSG). Residue Cys-20 is the site of N-palmitoyl cysteine attachment. A lipid anchor (S-diacylglycerol cysteine) is attached at Cys-20. A run of 2 helical transmembrane segments spans residues 43–63 (SIIF…IFIF) and 82–102 (IETI…IPTV). The disordered stretch occupies residues 317 to 374 (ERHGMKPMILGNNEKYDNEFKKEEDHNSKEMEKISKGAKDENASKLHKKEHDDHGGGH). Residues 330–374 (EKYDNEFKKEEDHNSKEMEKISKGAKDENASKLHKKEHDDHGGGH) are compositionally biased toward basic and acidic residues.

Belongs to the cytochrome c oxidase subunit 2 family.

It is found in the cell membrane. It carries out the reaction 2 a quinol + O2 = 2 a quinone + 2 H2O. Functionally, catalyzes quinol oxidation with the concomitant reduction of oxygen to water. Subunit II transfers the electrons from a quinol to the binuclear center of the catalytic subunit I. This Staphylococcus epidermidis (strain ATCC 12228 / FDA PCI 1200) protein is Probable quinol oxidase subunit 2 (qoxA).